Reading from the N-terminus, the 384-residue chain is S-adenosylmethionine synthase (384 aa).

His15 serves as a coordination point for ATP. Asp17 is a Mg(2+) binding site. Glu43 contacts K(+). 2 residues coordinate L-methionine: Glu56 and Gln99. Positions Gln99–Arg109 are flexible loop. ATP is bound by residues Asp164–Lys166, Arg230–Phe231, Asp239, Arg245–Lys246, Ala262, and Lys266. Asp239 is a binding site for L-methionine. Lys270 contacts L-methionine.

It belongs to the AdoMet synthase family. Homotetramer; dimer of dimers. Mg(2+) serves as cofactor. Requires K(+) as cofactor.

The protein resides in the cytoplasm. The enzyme catalyses L-methionine + ATP + H2O = S-adenosyl-L-methionine + phosphate + diphosphate. Its pathway is amino-acid biosynthesis; S-adenosyl-L-methionine biosynthesis; S-adenosyl-L-methionine from L-methionine: step 1/1. Catalyzes the formation of S-adenosylmethionine (AdoMet) from methionine and ATP. The overall synthetic reaction is composed of two sequential steps, AdoMet formation and the subsequent tripolyphosphate hydrolysis which occurs prior to release of AdoMet from the enzyme. This is S-adenosylmethionine synthase from Salmonella agona (strain SL483).